Consider the following 370-residue polypeptide: Dihydrolipoyllysine-residue acetyltransferase component of acetoin cleaving system (370 aa).

Residues I4–V79 enclose the Lipoyl-binding domain. An N6-lipoyllysine modification is found at K45. In terms of domain architecture, AB hydrolase-1 spans P135–A355.

It depends on (R)-lipoate as a cofactor.

The catalysed reaction is N(6)-[(R)-dihydrolipoyl]-L-lysyl-[protein] + acetyl-CoA = N(6)-[(R)-S(8)-acetyldihydrolipoyl]-L-lysyl-[protein] + CoA. It functions in the pathway ketone degradation; acetoin degradation. This chain is Dihydrolipoyllysine-residue acetyltransferase component of acetoin cleaving system (acoC), found in Pseudomonas putida (Arthrobacter siderocapsulatus).